The chain runs to 127 residues: DNA-directed RNA polymerases I, II, and III subunit RPABC2 (127 aa).

The span at Met-1 to Glu-34 shows a compositional bias: acidic residues. The disordered stretch occupies residues Met-1–Thr-53. Residue Ser-2 is modified to N-acetylserine. Ser-2 carries the post-translational modification Phosphoserine; by CK2.

Belongs to the archaeal Rpo6/eukaryotic RPB6 RNA polymerase subunit family. Component of the RNA polymerase I (Pol I), RNA polymerase II (Pol II) and RNA polymerase III (Pol III) complexes consisting of at least 13, 12 and 17 subunits, respectively. Pol I complex consists of a ten-subunit catalytic core composed of POLR1A/RPA1, POLR1B/RPA2, POLR1C/RPAC1, POLR1D/RPAC2, POLR1H/RPA12, POLR2E/RPABC1, POLR2F/RPABC2, POLR2H/RPABC3, POLR2K/RPABC4 and POLR2L/RPABC5; a mobile stalk subunit POLR1F/RPA43 protruding from the core and additional subunits homologous to general transcription factors POLR1E/RPA49 and POLR1G/RPA34. Part of Pol I pre-initiation complex (PIC), in which Pol I core assembles with RRN3 and promoter-bound UTBF and SL1/TIF-IB complex. Pol II complex contains a ten-subunit catalytic core composed of POLR2A/RPB1, POLR2B/RPB2, POLR2C/RPB3, POLR2I/RPB9, POLR2J/RPB11, POLR2E/RPABC1, POLR2F/RPABC2, POLR2H/RPABC3, POLR2K/RPABC4 and POLR2L/RPABC5 and a mobile stalk composed of two subunits POLR2D/RPB4 and POLR2G/RPB7. Part of Pol II(G) complex, in which Pol II core associates with an additional subunit POLR2M; unlike conventional Pol II, Pol II(G) functions as a transcriptional repressor. Part of TBP-based Pol II pre-initiation complex (PIC), in which Pol II core assembles with general transcription factors and other specific initiation factors including GTF2E1, GTF2E2, GTF2F1, GTF2F2, TCEA1, ERCC2, ERCC3, GTF2H2, GTF2H3, GTF2H4, GTF2H5, GTF2A1, GTF2A2, GTF2B and TBP; this large multi-subunit PIC complex mediates DNA unwinding and targets Pol II core to the transcription start site where the first phosphodiester bond forms. Pol III complex consists of a ten-subunit catalytic core composed of POLR3A/RPC1, POLR3B/RPC2, POLR1C/RPAC1, POLR1D/RPAC2, POLR3K/RPC10, POLR2E/RPABC1, POLR2F/RPABC2, POLR2H/RPABC3, POLR2K/RPABC4 and POLR2L/RPABC5; a mobile stalk composed of two subunits POLR3H/RPC8 and CRCP/RPC9, protruding from the core and functioning primarily in transcription initiation; and additional subunits homologous to general transcription factors of the RNA polymerase II machinery, POLR3C/RPC3-POLR3F/RPC6-POLR3G/RPC7 heterotrimer required for transcription initiation and POLR3D/RPC4-POLR3E/RPC5 heterodimer involved in both transcription initiation and termination.

It is found in the nucleus. It localises to the nucleolus. Functionally, DNA-dependent RNA polymerase catalyzes the transcription of DNA into RNA using the four ribonucleoside triphosphates as substrates. Common component of RNA polymerases I, II, and III which synthesize ribosomal RNA precursors, mRNA precursors and many functional non-coding RNAs, and small RNAs, such as 5S rRNA and tRNAs, respectively. Pol II is the central component of the basal RNA polymerase II transcription machinery. Pols are composed of mobile elements that move relative to each other. In Pol II, POLR2F/RPABC2 is part of the clamp element and together with parts of POLR2A/RPB1 and POLR2B/RPB2 forms a pocket to which the POLR2D/RPB4-POLR2G/RPB7 subcomplex binds. The chain is DNA-directed RNA polymerases I, II, and III subunit RPABC2 from Mus musculus (Mouse).